The primary structure comprises 556 residues: (S)-N-methylcanadine 1-hydroxylase CYP82Y1 (556 aa).

Residues 18–38 (TAVGTLILAFLLTLSPVIIYY) form a helical membrane-spanning segment. Residue Cys500 coordinates heme.

Belongs to the cytochrome P450 family. Heme is required as a cofactor. As to expression, highly expressed in capsules. Expressed is stems.

The protein localises to the membrane. The enzyme catalyses (S)-cis-N-methylcanadine + reduced [NADPH--hemoprotein reductase] + O2 = (S)-1-hydroxy-N-methylcanadine + oxidized [NADPH--hemoprotein reductase] + H2O + H(+). It participates in alkaloid biosynthesis. Its function is as follows. Cytochrome P450 involved in the biosynthesis of the benzylisoquinoline alkaloid noscapine. Converts (S)-N-methylcanadine to (S)-1-hydroxy-N-methylcanadine. This is (S)-N-methylcanadine 1-hydroxylase CYP82Y1 from Papaver somniferum (Opium poppy).